The sequence spans 552 residues: Putative transport protein PBPRA2144 (552 aa).

The next 5 membrane-spanning stretches (helical) occupy residues 4–24 (IALSISILALVAVLGLWIGNW), 26–46 (ICGVGLGIGGVLFGGIFVGHF), 65–85 (FGLILFVYTIGIQVGPGFFAS), 95–115 (AFAALVVLLGCIVAIGLYKIF), and 158–178 (MGYAVAYPFGICGILLTMWIL). 2 RCK C-terminal domains span residues 188–276 (KEAE…VIGE) and 279–361 (DASL…IVGN). 6 consecutive transmembrane segments (helical) span residues 371–391 (MLPVFVGIGLGVLLGSIPFYL), 394–414 (FPAAIKLGLAGGPLLVALILA), 439–459 (IVLFLAVVGLKSGGGFVDTLV), 464–484 (LSWMGYGIVITLVPLLTVGFL), 493–513 (YLTICGMLAGSMTDPPALAFA), and 532–552 (PLVMCLRILSPQILALLLWAV).

This sequence belongs to the AAE transporter (TC 2.A.81) family. YidE subfamily.

It is found in the cell membrane. This chain is Putative transport protein PBPRA2144, found in Photobacterium profundum (strain SS9).